A 131-amino-acid chain; its full sequence is Lymphocyte antigen 6C1 (131 aa).

Residues 1–26 (MDTSHTTKSCVLILLVALLCAERAQG) form the signal peptide. Positions 27 to 115 (LQCYECYGVP…PTAGSTWTMA (89 aa)) constitute a UPAR/Ly6 domain. 5 disulfides stabilise this stretch: Cys29–Cys53, Cys32–Cys41, Cys46–Cys74, Cys78–Cys95, and Cys96–Cys101. Residue Gly109 is the site of GPI-anchor amidated glycine attachment. The propeptide at 110–131 (STWTMAGVLLFSLSSVVLQTLL) is removed in mature form.

The protein resides in the cell membrane. This Mus musculus (Mouse) protein is Lymphocyte antigen 6C1 (Ly6c1).